Reading from the N-terminus, the 287-residue chain is Large ribosomal subunit protein uL2 (287 aa).

The disordered stretch occupies residues 220 to 287 (VRGSVMNPCD…SKRSRGGRDS (68 aa)). The segment covering 271-287 (VRRRRRISKRSRGGRDS) has biased composition (basic residues).

It belongs to the universal ribosomal protein uL2 family. As to quaternary structure, part of the 50S ribosomal subunit. Forms a bridge to the 30S subunit in the 70S ribosome.

One of the primary rRNA binding proteins. Required for association of the 30S and 50S subunits to form the 70S ribosome, for tRNA binding and peptide bond formation. It has been suggested to have peptidyltransferase activity; this is somewhat controversial. Makes several contacts with the 16S rRNA in the 70S ribosome. The chain is Large ribosomal subunit protein uL2 from Prochlorococcus marinus (strain MIT 9515).